A 115-amino-acid chain; its full sequence is U31-theraphotoxin-Cg1b (115 aa).

The N-terminal stretch at methionine 1–glycine 18 is a signal peptide. The propeptide occupies arginine 19–glutamate 51. Disulfide bonds link cysteine 52–cysteine 67, cysteine 60–cysteine 73, cysteine 64–cysteine 113, and cysteine 66–cysteine 86.

This sequence belongs to the neurotoxin 03 (Tx2) family. 02 subfamily. In terms of tissue distribution, expressed by the venom gland.

The protein resides in the secreted. Probable ion channel inhibitor. This Chilobrachys guangxiensis (Chinese earth tiger tarantula) protein is U31-theraphotoxin-Cg1b.